The following is a 624-amino-acid chain: (-)-beta-phellandrene synthase 3, chloroplastic (624 aa).

A chloroplast-targeting transit peptide spans 1-48; sequence MAIVSSVPLASKSCLHKSLISSIHKLKPFCRTIPTLGMSRPGKYVMPS. Aspartate 375, aspartate 379, and aspartate 527 together coordinate Mg(2+). Positions 375–379 match the DDXXD motif motif; the sequence is DDMYD.

The protein belongs to the terpene synthase family. Tpsd subfamily. The cofactor is Mg(2+). It depends on Mn(2+) as a cofactor.

The protein localises to the plastid. The protein resides in the chloroplast. It catalyses the reaction (2E)-geranyl diphosphate = (-)-beta-phellandrene + diphosphate. It functions in the pathway terpene metabolism; oleoresin biosynthesis. In terms of biological role, terpene synthase (TPS) involved in the biosynthesis of monoterpene natural products included in conifer oleoresin secretions and volatile emissions; these compounds contribute to biotic and abiotic stress defense against herbivores and pathogens. Catalyzes the conversion of (2E)-geranyl diphosphate (GPP) to (-)-beta-phellandrene. This chain is (-)-beta-phellandrene synthase 3, chloroplastic, found in Picea sitchensis (Sitka spruce).